The primary structure comprises 393 residues: E3 ubiquitin-protein transferase RMND5B (393 aa).

At M1 the chain carries N-acetylmethionine. Residues 116–148 (QQQILQMAIVEHLYQQGMLSVAEELCQESTLNV) form the LisH domain. Positions 155-212 (PFLELNRILEALHEQDLGPALEWAVSHRQRLLELNSSLEFKLHRLHFIRLLAGGPAKQ) constitute a CTLH domain. The segment at 338–379 (CPILRQQTSDSNPPIKLICGHVISRDALNKLINGGKLKCPYC) adopts an RING-Gid-type zinc-finger fold.

As to quaternary structure, identified in the CTLH complex that contains GID4, RANBP9 and/or RANBP10, MKLN1, MAEA, RMND5A (or alternatively its paralog RMND5B), GID8, ARMC8, WDR26 and YPEL5. Within this complex, MAEA, RMND5A (or alternatively its paralog RMND5B), GID8, WDR26, and RANBP9 and/or RANBP10 form the catalytic core, while GID4, MKLN1, ARMC8 and YPEL5 have ancillary roles.

It localises to the cytoplasm. It is found in the cytosol. It carries out the reaction S-ubiquitinyl-[E2 ubiquitin-conjugating enzyme]-L-cysteine + [acceptor protein]-L-lysine = [E2 ubiquitin-conjugating enzyme]-L-cysteine + N(6)-ubiquitinyl-[acceptor protein]-L-lysine.. In terms of biological role, core component of the CTLH E3 ubiquitin-protein ligase complex that selectively accepts ubiquitin from UBE2H and mediates ubiquitination and subsequent proteasomal degradation of the transcription factor HBP1. MAEA and RMND5A are both required for catalytic activity of the CTLH E3 ubiquitin-protein ligase complex. Catalytic activity of the complex is required for normal cell proliferation. The CTLH E3 ubiquitin-protein ligase complex is not required for the degradation of enzymes involved in gluconeogenesis, such as FBP1. This Homo sapiens (Human) protein is E3 ubiquitin-protein transferase RMND5B (RMND5B).